We begin with the raw amino-acid sequence, 448 residues long: Fibulin-5 (448 aa).

A signal peptide spans 1–23; that stretch reads MPGIKRILTVTILALCLPSPGNA. Positions 42–82 constitute an EGF-like 1; calcium-binding domain; that stretch reads DIDECRTIPEACRGDMMCVNQNGRYLCIPRTNPVYRGPYSN. Intrachain disulfides connect Cys46–Cys59, Cys53–Cys68, Cys131–Cys144, Cys138–Cys153, Cys155–Cys166, Cys172–Cys181, Cys177–Cys190, Cys192–Cys205, Cys211–Cys221, Cys217–Cys230, Cys232–Cys245, Cys251–Cys262, Cys258–Cys271, Cys273–Cys286, Cys292–Cys305, Cys299–Cys314, and Cys320–Cys332. The short motif at 54–56 is the Cell attachment site element; that stretch reads RGD. The 41-residue stretch at 127–167 folds into the EGF-like 2; calcium-binding domain; the sequence is DVDECATDSHQCNPTQICINTEGGYTCSCTDGYWLLEGQCL. An EGF-like 3; calcium-binding domain is found at 168–206; the sequence is DIDECRYGYCQQLCANVPGSYSCTCNPGFTLNEDGRSCQ. One can recognise an EGF-like 4; calcium-binding domain in the interval 207–246; that stretch reads DVNECATENPCVQTCVNTYGSFICRCDPGYELEEDGVHCS. The interaction with LOXL1 stretch occupies residues 245–448; the sequence is CSDMDECSFS…LRIYVSQYPF (204 aa). The region spanning 247–287 is the EGF-like 5; calcium-binding domain; sequence DMDECSFSEFLCQHECVNQPGTYFCSCPPGYILLDDNRSCQ. Residues Asn283 and Asn296 are each glycosylated (N-linked (GlcNAc...) asparagine). An EGF-like 6; calcium-binding domain is found at 288 to 333; that stretch reads DINECEHRNHTCNLQQTCYNLQGGFKCIDPIRCEEPYLRISDNRCM.

Belongs to the fibulin family. As to quaternary structure, homodimer. Monomer, homodimerizes in presence of Ca(2+). Interacts with ELN. Interacts (via N-terminus) with the integrins ITGAV/ITGB3, ITGAV/ITGB5 and ITGA9/ITGB1. Interacts with FBN1 (via N-terminal domain). Forms a ternary complex with ELN and FBN1. Interacts with EFEMP2 with moderate affinity. Interacts with LOXL1. In terms of processing, N-glycosylated.

The protein localises to the secreted. The protein resides in the extracellular space. It localises to the extracellular matrix. Functionally, essential for elastic fiber formation, is involved in the assembly of continuous elastin (ELN) polymer and promotes the interaction of microfibrils and ELN. Stabilizes and organizes elastic fibers in the skin, lung and vasculature. Promotes adhesion of endothelial cells through interaction of integrins and the RGD motif. Vascular ligand for integrin receptors which may play a role in vascular development and remodeling. May act as an adapter that mediates the interaction between FBN1 and ELN. The protein is Fibulin-5 (FBLN5) of Pongo abelii (Sumatran orangutan).